The following is a 106-amino-acid chain: Small ribosomal subunit protein uS10 (106 aa).

It belongs to the universal ribosomal protein uS10 family. In terms of assembly, part of the 30S ribosomal subunit.

In terms of biological role, involved in the binding of tRNA to the ribosomes. The sequence is that of Small ribosomal subunit protein uS10 from Prochlorococcus marinus subsp. pastoris (strain CCMP1986 / NIES-2087 / MED4).